The primary structure comprises 154 residues: Egg-lysin (154 aa).

Positions 1 to 18 are cleaved as a signal peptide; it reads MKLLVLCIFAMMATLAMS.

As to quaternary structure, homodimer. Sperm.

In terms of biological role, dissolves the egg vitelline layer nonenzymatically during fertilization. It creates a hole of about 3 mu-m in diameter through which the sperm pass. This chain is Egg-lysin, found in Haliotis walallensis (Flat abalone).